A 486-amino-acid chain; its full sequence is Bifunctional protein GlmU (486 aa).

The segment at 1-241 is pyrophosphorylase; that stretch reads MSASDSSSAV…ARELAGVNDR (241 aa). UDP-N-acetyl-alpha-D-glucosamine-binding positions include 13–16, K27, Q84, and 89–90; these read LAAG and GT. D114 contacts Mg(2+). 4 residues coordinate UDP-N-acetyl-alpha-D-glucosamine: G151, E166, N181, and N239. N239 is a binding site for Mg(2+). The interval 242 to 262 is linker; the sequence is VQLAEAGAELNRRTVEAAMRG. The N-acetyltransferase stretch occupies residues 263–486; it reads GATIVDPATT…AQNSVPNQEG (224 aa). Residues R344 and K362 each coordinate UDP-N-acetyl-alpha-D-glucosamine. The active-site Proton acceptor is H374. Residues Y377 and N388 each coordinate UDP-N-acetyl-alpha-D-glucosamine. Acetyl-CoA is bound by residues A391, 397-398, S416, and A434; that span reads NY. Residues 464–486 form a disordered region; sequence KRPGTAAADAAAAAQNSVPNQEG.

In the N-terminal section; belongs to the N-acetylglucosamine-1-phosphate uridyltransferase family. It in the C-terminal section; belongs to the transferase hexapeptide repeat family. As to quaternary structure, homotrimer. It depends on Mg(2+) as a cofactor.

The protein localises to the cytoplasm. The catalysed reaction is alpha-D-glucosamine 1-phosphate + acetyl-CoA = N-acetyl-alpha-D-glucosamine 1-phosphate + CoA + H(+). It carries out the reaction N-acetyl-alpha-D-glucosamine 1-phosphate + UTP + H(+) = UDP-N-acetyl-alpha-D-glucosamine + diphosphate. It participates in nucleotide-sugar biosynthesis; UDP-N-acetyl-alpha-D-glucosamine biosynthesis; N-acetyl-alpha-D-glucosamine 1-phosphate from alpha-D-glucosamine 6-phosphate (route II): step 2/2. The protein operates within nucleotide-sugar biosynthesis; UDP-N-acetyl-alpha-D-glucosamine biosynthesis; UDP-N-acetyl-alpha-D-glucosamine from N-acetyl-alpha-D-glucosamine 1-phosphate: step 1/1. It functions in the pathway bacterial outer membrane biogenesis; LPS lipid A biosynthesis. In terms of biological role, catalyzes the last two sequential reactions in the de novo biosynthetic pathway for UDP-N-acetylglucosamine (UDP-GlcNAc). The C-terminal domain catalyzes the transfer of acetyl group from acetyl coenzyme A to glucosamine-1-phosphate (GlcN-1-P) to produce N-acetylglucosamine-1-phosphate (GlcNAc-1-P), which is converted into UDP-GlcNAc by the transfer of uridine 5-monophosphate (from uridine 5-triphosphate), a reaction catalyzed by the N-terminal domain. This chain is Bifunctional protein GlmU, found in Corynebacterium efficiens (strain DSM 44549 / YS-314 / AJ 12310 / JCM 11189 / NBRC 100395).